The following is a 216-amino-acid chain: Probable transaldolase (216 aa).

Lysine 83 functions as the Schiff-base intermediate with substrate in the catalytic mechanism.

The protein belongs to the transaldolase family. Type 3B subfamily.

The protein resides in the cytoplasm. The enzyme catalyses D-sedoheptulose 7-phosphate + D-glyceraldehyde 3-phosphate = D-erythrose 4-phosphate + beta-D-fructose 6-phosphate. It functions in the pathway carbohydrate degradation; pentose phosphate pathway; D-glyceraldehyde 3-phosphate and beta-D-fructose 6-phosphate from D-ribose 5-phosphate and D-xylulose 5-phosphate (non-oxidative stage): step 2/3. Its function is as follows. Transaldolase is important for the balance of metabolites in the pentose-phosphate pathway. The protein is Probable transaldolase of Symbiobacterium thermophilum (strain DSM 24528 / JCM 14929 / IAM 14863 / T).